The sequence spans 117 residues: MDKKSARIRRATRARRKLKELGATRLVVHRTPRHIYAQVIAPNGSEVLVAASTVEKAISEQLKYTGNKEAAAAVGKAIAERALEKGVKDVSFDRSGFQYHGRVQALADAAREAGLQF.

The protein belongs to the universal ribosomal protein uL18 family. In terms of assembly, part of the 50S ribosomal subunit; part of the 5S rRNA/L5/L18/L25 subcomplex. Contacts the 5S and 23S rRNAs.

Functionally, this is one of the proteins that bind and probably mediate the attachment of the 5S RNA into the large ribosomal subunit, where it forms part of the central protuberance. The protein is Large ribosomal subunit protein uL18 of Edwardsiella ictaluri (strain 93-146).